A 93-amino-acid polypeptide reads, in one-letter code: Defensin-like protein 229 (93 aa).

An N-terminal signal peptide occupies residues 1 to 19; it reads MKSTTLFMVSCVLIFCVLS. 4 disulfides stabilise this stretch: cysteine 38/cysteine 93, cysteine 48/cysteine 72, cysteine 56/cysteine 84, and cysteine 70/cysteine 86.

Belongs to the DEFL family. In terms of tissue distribution, flower buds.

It is found in the secreted. In Arabidopsis thaliana (Mouse-ear cress), this protein is Defensin-like protein 229 (SCRL27).